The chain runs to 143 residues: Transcriptional regulator MraZ (143 aa).

2 SpoVT-AbrB domains span residues 5–47 (EYKH…SLKE) and 76–119 (ACEC…SEEN).

Belongs to the MraZ family. Forms oligomers.

It is found in the cytoplasm. Its subcellular location is the nucleoid. The polypeptide is Transcriptional regulator MraZ (Caldicellulosiruptor saccharolyticus (strain ATCC 43494 / DSM 8903 / Tp8T 6331)).